The following is a 210-amino-acid chain: Probable septum site-determining protein MinC (210 aa).

Belongs to the MinC family. As to quaternary structure, interacts with MinD and FtsZ.

Functionally, cell division inhibitor that blocks the formation of polar Z ring septums. Rapidly oscillates between the poles of the cell to destabilize FtsZ filaments that have formed before they mature into polar Z rings. Prevents FtsZ polymerization. The sequence is that of Probable septum site-determining protein MinC from Thermotoga petrophila (strain ATCC BAA-488 / DSM 13995 / JCM 10881 / RKU-1).